Reading from the N-terminus, the 549-residue chain is Cytochrome bc1 complex cytochrome b subunit (549 aa).

The chain crosses the membrane as a helical span at residues 45–65; the sequence is FLLGEIALYSFVVLLITGVYL. Positions 114 and 128 each coordinate heme. The next 3 membrane-spanning stretches (helical) occupy residues 118–138, 146–166, and 189–209; these read ALMF…TGAF, WVIG…GYSL, and VIGT…TILI. 2 residues coordinate heme: H216 and H231. 5 helical membrane passes run 217 to 237, 266 to 286, 335 to 355, 381 to 401, and 418 to 438; these read ILLL…LVWF, SGAF…LLQI, PVWV…YPFL, IGAM…NDII, and IGMV…CIGL.

Belongs to the cytochrome b family. As to quaternary structure, the cytochrome bc1 complex is composed of a cytochrome b (QcrB), the Rieske iron-sulfur protein (QcrA) and a diheme cytochrome c (QcrC) subunit. It depends on heme as a cofactor.

Its subcellular location is the cell membrane. It carries out the reaction a quinol + 2 Fe(III)-[cytochrome c](out) = a quinone + 2 Fe(II)-[cytochrome c](out) + 2 H(+)(out). Cytochrome b subunit of the cytochrome bc1 complex, an essential component of the respiratory electron transport chain required for ATP synthesis. The bc1 complex catalyzes the oxidation of ubiquinol and the reduction of cytochrome c in the respiratory chain. The bc1 complex operates through a Q-cycle mechanism that couples electron transfer to generation of the proton gradient that drives ATP synthesis. The cytochrome b subunit contains two ubiquinol reactive sites: the oxidation (QP) site and the reduction (QN) site. The sequence is that of Cytochrome bc1 complex cytochrome b subunit (qcrB) from Mycobacterium bovis (strain ATCC BAA-935 / AF2122/97).